A 136-amino-acid polypeptide reads, in one-letter code: MSNSSPETVSQPSQEVKYGEREIAEGQLITFPNPRVGRRYDINITLPEFTCKCPFSGYPDFATIYITYVPDERVVELKALKLYINSYRDRYISHEESANQILDDFVAACDPLEANVKADFTPRGNVHTVVEVRHTK.

Residue Cys53 is the Thioimide intermediate of the active site. Catalysis depends on Asp60, which acts as the Proton donor. Substrate is bound by residues 75–77 and 94–95; these read VEL and HE.

Belongs to the GTP cyclohydrolase I family. QueF type 1 subfamily.

The protein localises to the cytoplasm. It carries out the reaction 7-aminomethyl-7-carbaguanine + 2 NADP(+) = 7-cyano-7-deazaguanine + 2 NADPH + 3 H(+). It functions in the pathway tRNA modification; tRNA-queuosine biosynthesis. Functionally, catalyzes the NADPH-dependent reduction of 7-cyano-7-deazaguanine (preQ0) to 7-aminomethyl-7-deazaguanine (preQ1). This is NADPH-dependent 7-cyano-7-deazaguanine reductase from Nostoc sp. (strain PCC 7120 / SAG 25.82 / UTEX 2576).